The sequence spans 310 residues: E3 ubiquitin-protein ligase CSU1 (310 aa).

An RING-type 1; degenerate zinc finger spans residues 43–67; it reads CSLCLKPFIDPMCCHKGHVFCRECI. Positions 75–95 form a coiled coil; it reads KKDIQRRLAAHSSQKKQDKDE. The interval 110-138 is disordered; the sequence is EFDQQNHSAMPRNSDKNHNEDKNGFHGAN. Positions 122-133 are enriched in basic and acidic residues; the sequence is NSDKNHNEDKNG. The segment at 221-263 adopts an RING-type 2 zinc-finger fold; that stretch reads CPSCKVTLTNTMSLVALSSCGHVFCKKCAEKFMPVDKVCLVCD.

The protein belongs to the NOSIP family.

The protein resides in the nucleus. It localises to the nucleus speckle. It carries out the reaction S-ubiquitinyl-[E2 ubiquitin-conjugating enzyme]-L-cysteine + [acceptor protein]-L-lysine = [E2 ubiquitin-conjugating enzyme]-L-cysteine + N(6)-ubiquitinyl-[acceptor protein]-L-lysine.. It functions in the pathway protein modification; protein ubiquitination. In terms of biological role, RING-finger E3 ubiquitin-protein ligase that plays an major role in maintaining COP1 homeostasis in darkness. Negatively regulates COP1 protein accumulation by targeting COP1 for ubiquitination and subsequent proteasomal degradation in dark-grown seedlings. Negatively regulates the accumulation of SPA1 protein in the dark. This is E3 ubiquitin-protein ligase CSU1 from Arabidopsis thaliana (Mouse-ear cress).